Here is a 63-residue protein sequence, read N- to C-terminus: Large ribosomal subunit protein bL32 (63 aa).

The protein belongs to the bacterial ribosomal protein bL32 family.

This is Large ribosomal subunit protein bL32 from Lactobacillus delbrueckii subsp. bulgaricus (strain ATCC 11842 / DSM 20081 / BCRC 10696 / JCM 1002 / NBRC 13953 / NCIMB 11778 / NCTC 12712 / WDCM 00102 / Lb 14).